Reading from the N-terminus, the 193-residue chain is GTP cyclohydrolase-2 (193 aa).

Arg45–Glu49 contributes to the GTP binding site. Zn(2+) contacts are provided by Cys50, Cys61, and Cys63. Residues Gln66, Glu87–Arg89, and Thr109 contribute to the GTP site. Residue Asp121 is the Proton acceptor of the active site. Catalysis depends on Arg123, which acts as the Nucleophile. Positions 144 and 149 each coordinate GTP.

Belongs to the GTP cyclohydrolase II family. Requires Zn(2+) as cofactor.

It carries out the reaction GTP + 4 H2O = 2,5-diamino-6-hydroxy-4-(5-phosphoribosylamino)-pyrimidine + formate + 2 phosphate + 3 H(+). It participates in cofactor biosynthesis; riboflavin biosynthesis; 5-amino-6-(D-ribitylamino)uracil from GTP: step 1/4. Functionally, catalyzes the conversion of GTP to 2,5-diamino-6-ribosylamino-4(3H)-pyrimidinone 5'-phosphate (DARP), formate and pyrophosphate. The chain is GTP cyclohydrolase-2 from Campylobacter hominis (strain ATCC BAA-381 / DSM 21671 / CCUG 45161 / LMG 19568 / NCTC 13146 / CH001A).